The chain runs to 697 residues: Sialidase B (697 aa).

A signal peptide spans 1 to 29 (MNKRGLYSKLGISVVGISLLMGVPTLIHA). A substrate-binding site is contributed by Arg-245. Asp-270 functions as the Proton acceptor in the catalytic mechanism. BNR repeat units lie at residues 280 to 291 (SYSDDNGKTWSE), 462 to 473 (TTSQNRGESWEQ), and 517 to 528 (LISDDSGQTWKK). Glu-541 is an active-site residue. Arg-557 lines the substrate pocket. Residues 566 to 577 (MTSRDSGETWSK) form a BNR 4 repeat. Substrate is bound at residue Arg-619. The active-site Nucleophile is the Tyr-653.

Belongs to the glycosyl hydrolase 33 family.

The enzyme catalyses Hydrolysis of alpha-(2-&gt;3)-, alpha-(2-&gt;6)-, alpha-(2-&gt;8)- glycosidic linkages of terminal sialic acid residues in oligosaccharides, glycoproteins, glycolipids, colominic acid and synthetic substrates.. This is Sialidase B (nanB) from Streptococcus pneumoniae serotype 4 (strain ATCC BAA-334 / TIGR4).